The sequence spans 450 residues: ADP-specific phosphofructokinase (450 aa).

In terms of domain architecture, ADPK spans 1–449; that stretch reads MIPEHLSIYT…FLTYLEFLKR (449 aa). Residues glutamate 260, glutamate 290, and aspartate 433 each coordinate Mg(2+). Aspartate 433 serves as the catalytic Proton acceptor.

This sequence belongs to the carbohydrate kinase PfkC family. Requires Mg(2+) as cofactor.

Its subcellular location is the cytoplasm. It carries out the reaction beta-D-fructose 6-phosphate + ADP = beta-D-fructose 1,6-bisphosphate + AMP + H(+). The protein operates within carbohydrate degradation; glycolysis. In terms of biological role, catalyzes the phosphorylation of fructose 6-phosphate to fructose 1,6-bisphosphate using ADP as the phosphate donor. This Pyrococcus horikoshii (strain ATCC 700860 / DSM 12428 / JCM 9974 / NBRC 100139 / OT-3) protein is ADP-specific phosphofructokinase.